The chain runs to 789 residues: ATP-dependent 6-phosphofructokinase (789 aa).

Positions 1–404 are N-terminal catalytic PFK domain 1; it reads MSLKRNIRRL…NLETYKLLTK (404 aa). ATP contacts are provided by residues glycine 41, 104 to 105, and 134 to 137; these read RC and GDGS. Aspartate 135 serves as a coordination point for Mg(2+). Residues 180–182, arginine 217, 224–226, glutamate 280, arginine 307, and 313–316 each bind substrate; these read SID, MGR, and HVQR. Residue aspartate 182 is the Proton acceptor of the active site. An interdomain linker region spans residues 405–419; the sequence is LRTVEKDNLSGGQNF. The tract at residues 420 to 789 is C-terminal regulatory PFK domain 2; the sequence is NVAVMNVGAP…EAMEDTEDYD (370 aa). Beta-D-fructose 2,6-bisphosphate-binding positions include lysine 489, 547–551, arginine 585, 592–594, glutamate 647, arginine 673, 679–682, and arginine 753; these read TISNN, MGG, and HAQQ.

It belongs to the phosphofructokinase type A (PFKA) family. ATP-dependent PFK group I subfamily. Eukaryotic two domain clade 'E' sub-subfamily. In terms of assembly, homotetramer. Requires Mg(2+) as cofactor.

It is found in the cytoplasm. The catalysed reaction is beta-D-fructose 6-phosphate + ATP = beta-D-fructose 1,6-bisphosphate + ADP + H(+). Its pathway is carbohydrate degradation; glycolysis; D-glyceraldehyde 3-phosphate and glycerone phosphate from D-glucose: step 3/4. Its activity is regulated as follows. Allosterically activated by ADP, AMP, or fructose 2,6-bisphosphate, and allosterically inhibited by ATP or citrate. Its function is as follows. Catalyzes the phosphorylation of D-fructose 6-phosphate to fructose 1,6-bisphosphate by ATP, the first committing step of glycolysis. The polypeptide is ATP-dependent 6-phosphofructokinase (PFK) (Haemonchus contortus (Barber pole worm)).